A 234-amino-acid polypeptide reads, in one-letter code: N-(5'-phosphoribosyl)anthranilate isomerase 1 (234 aa).

Belongs to the TrpF family.

The enzyme catalyses N-(5-phospho-beta-D-ribosyl)anthranilate = 1-(2-carboxyphenylamino)-1-deoxy-D-ribulose 5-phosphate. It functions in the pathway amino-acid biosynthesis; L-tryptophan biosynthesis; L-tryptophan from chorismate: step 3/5. The chain is N-(5'-phosphoribosyl)anthranilate isomerase 1 (trpF1) from Methanosarcina mazei (strain ATCC BAA-159 / DSM 3647 / Goe1 / Go1 / JCM 11833 / OCM 88) (Methanosarcina frisia).